The primary structure comprises 437 residues: GTPase Der (437 aa).

2 EngA-type G domains span residues 4 to 167 (PVVA…AEKD) and 175 to 352 (IRFS…DHQH). GTP contacts are provided by residues 10 to 17 (GRPNVGKS), 57 to 61 (DTGGI), 119 to 122 (NKVD), 181 to 188 (GRPNVGKS), 229 to 233 (DTAGI), and 294 to 297 (NKWD). One can recognise a KH-like domain in the interval 353–437 (RRIQSAVLND…PIRLIKRRRK (85 aa)).

It belongs to the TRAFAC class TrmE-Era-EngA-EngB-Septin-like GTPase superfamily. EngA (Der) GTPase family. As to quaternary structure, associates with the 50S ribosomal subunit.

In terms of biological role, GTPase that plays an essential role in the late steps of ribosome biogenesis. This chain is GTPase Der, found in Limosilactobacillus fermentum (strain NBRC 3956 / LMG 18251) (Lactobacillus fermentum).